We begin with the raw amino-acid sequence, 248 residues long: PF03932 family protein CutC (248 aa).

Belongs to the CutC family.

It localises to the cytoplasm. The protein is PF03932 family protein CutC of Porphyromonas gingivalis (strain ATCC 33277 / DSM 20709 / CIP 103683 / JCM 12257 / NCTC 11834 / 2561).